The following is a 259-amino-acid chain: Phosphate import ATP-binding protein PstB (259 aa).

In terms of domain architecture, ABC transporter spans 13–254 (LEVNNLNFHY…PRLQRTEDYI (242 aa)). Residue 45-52 (GPSGCGKS) participates in ATP binding.

The protein belongs to the ABC transporter superfamily. Phosphate importer (TC 3.A.1.7) family. As to quaternary structure, the complex is composed of two ATP-binding proteins (PstB), two transmembrane proteins (PstC and PstA) and a solute-binding protein (PstS).

It is found in the cell inner membrane. The catalysed reaction is phosphate(out) + ATP + H2O = ADP + 2 phosphate(in) + H(+). Part of the ABC transporter complex PstSACB involved in phosphate import. Responsible for energy coupling to the transport system. The sequence is that of Phosphate import ATP-binding protein PstB from Pasteurella multocida (strain Pm70).